The following is a 421-amino-acid chain: Telomeric repeat-binding factor 1 (421 aa).

A disordered region spans residues 1–30; that stretch reads MAETVSSAARDAPSREGWTDSDSPEQEEVG. Alanine 2 bears the N-acetylalanine mark. The tract at residues 49–255 is TRFH mediates dimerization; that stretch reads ENAELVAEVE…AATKVVENEK (207 aa). A Glycyl lysine isopeptide (Lys-Gly) (interchain with G-Cter in SUMO2) cross-link involves residue lysine 200. Serine 206 carries the post-translational modification Phosphoserine; by ATM. An interaction with RLIM region spans residues 252–365; that stretch reads ENEKARTQAS…PDTDDKSGRR (114 aa). Over residues 253 to 266 the composition is skewed to basic and acidic residues; that stretch reads NEKARTQASKDRPD. A disordered region spans residues 253 to 366; sequence NEKARTQASK…DTDDKSGRRK (114 aa). Polar residues predominate over residues 284 to 310; sequence VNGQQSTETEPLVDTVSSIRSHKNALS. A Nuclear localization signal motif is present at residues 313–367; it reads KHRRAPSDFSRNEARTGTLQCETTMERNRRTSGRNRLCVSENQPDTDDKSGRRKR. Residues 362 to 419 enclose the HTH myb-type domain; sequence SGRRKRQTWLWEEDRILKCGVKKYGEGNWAKILSHYKFNNRTSVMLKDRWRTMKRLKL. Residues 390–415 constitute a DNA-binding region (H-T-H motif); that stretch reads WAKILSHYKFNNRTSVMLKDRWRTMK.

In terms of assembly, homodimer; can contain both isoforms. Found in a complex with POT1; TINF2 and TNKS1. Interacts with ATM, TINF2, TNKS1, TNKS2, PINX1, NEK2 and MAPRE1. Component of the shelterin complex (telosome) composed of TERF1, TERF2, TINF2, TERF2IP ACD and POT1. Interacts with RLIM (via N-terminus). Interacts with FBXO4. Interaction with TINF2 protects against interaction with FBXO4 and subsequent polyubiquitination and proteasomal degradation. Interacts with GNL3L; this interaction promotes homodimerization. Interacts with TIN2. Interactions with GNL3L and TIN2 are mutually exclusive. Interacts with RTEL1. Interacts with CCDC79/TERB1. In terms of processing, phosphorylated preferentially on Ser-219 in an ATM-dependent manner in response to ionizing DNA damage. ADP-ribosylation by TNKS1 or TNKS2 diminishes its ability to bind to telomeric DNA. Post-translationally, ubiquitinated by RLIM/RNF12, leading to its degradation by the proteasome. Ubiquitinated by a SCF (SKP1-CUL1-F-box protein) ubiquitin-protein ligase complex, leading to its degradation by the proteasome.

The protein resides in the nucleus. Its subcellular location is the chromosome. It localises to the telomere. It is found in the cytoplasm. The protein localises to the cytoskeleton. The protein resides in the spindle. Its function is as follows. Binds the telomeric double-stranded 5'-TTAGGG-3' repeat and negatively regulates telomere length. Involved in the regulation of the mitotic spindle. Component of the shelterin complex (telosome) that is involved in the regulation of telomere length and protection. Shelterin associates with arrays of double-stranded 5'-TTAGGG-3' repeats added by telomerase and protects chromosome ends; without its protective activity, telomeres are no longer hidden from the DNA damage surveillance and chromosome ends are inappropriately processed by DNA repair pathways. This is Telomeric repeat-binding factor 1 (Terf1) from Mus musculus (Mouse).